Reading from the N-terminus, the 178-residue chain is uncharacterized protein (178 aa).

Basic and acidic residues predominate over residues 1 to 16 (MNKRTSVDASKEDLHP). The tract at residues 1 to 43 (MNKRTSVDASKEDLHPADPQSGEGVPPNRKNTKTSPRGEGTAP) is disordered.

This is an uncharacterized protein from Homo sapiens (Human).